The chain runs to 227 residues: MTLSFFDQFLSPTLFGIPLIALALLLPWTLFPAPSSRWVNSRLLTLQSWFINRFTQQLLLPLNMGGHKWGPYILLVMVFLISINMLGLLPYTFTPTTQLSVNMALAVPVWLMTVIIGLRKNPTAALGHLLPEGTPVPLIPALILIETISLFIRPLALGVRLTANLTAGHLLIQLIATAAFVLLPLMPTVAILTTILLFLLTLLEVAVAMIQAYVFVLLLSLYLQENV.

6 helical membrane-spanning segments follow: residues 14-34 (LFGIPLIALALLLPWTLFPAP), 69-89 (WGPYILLVMVFLISINMLGLL), 98-118 (QLSVNMALAVPVWLMTVIIGL), 132-152 (EGTPVPLIPALILIETISLFI), 180-200 (FVLLPLMPTVAILTTILLFLL), and 202-222 (LLEVAVAMIQAYVFVLLLSLY).

The protein belongs to the ATPase A chain family. Component of the ATP synthase complex composed at least of ATP5F1A/subunit alpha, ATP5F1B/subunit beta, ATP5MC1/subunit c (homooctomer), MT-ATP6/subunit a, MT-ATP8/subunit 8, ATP5ME/subunit e, ATP5MF/subunit f, ATP5MG/subunit g, ATP5MK/subunit k, ATP5MJ/subunit j, ATP5F1C/subunit gamma, ATP5F1D/subunit delta, ATP5F1E/subunit epsilon, ATP5PF/subunit F6, ATP5PB/subunit b, ATP5PD/subunit d, ATP5PO/subunit OSCP. ATP synthase complex consists of a soluble F(1) head domain (subunits alpha(3) and beta(3)) - the catalytic core - and a membrane F(0) domain - the membrane proton channel (subunits c, a, 8, e, f, g, k and j). These two domains are linked by a central stalk (subunits gamma, delta, and epsilon) rotating inside the F1 region and a stationary peripheral stalk (subunits F6, b, d, and OSCP). Interacts with DNAJC30; interaction is direct.

It localises to the mitochondrion inner membrane. The enzyme catalyses H(+)(in) = H(+)(out). Functionally, subunit a, of the mitochondrial membrane ATP synthase complex (F(1)F(0) ATP synthase or Complex V) that produces ATP from ADP in the presence of a proton gradient across the membrane which is generated by electron transport complexes of the respiratory chain. ATP synthase complex consist of a soluble F(1) head domain - the catalytic core - and a membrane F(1) domain - the membrane proton channel. These two domains are linked by a central stalk rotating inside the F(1) region and a stationary peripheral stalk. During catalysis, ATP synthesis in the catalytic domain of F(1) is coupled via a rotary mechanism of the central stalk subunits to proton translocation. With the subunit c (ATP5MC1), forms the proton-conducting channel in the F(0) domain, that contains two crucial half-channels (inlet and outlet) that facilitate proton movement from the mitochondrial intermembrane space (IMS) into the matrix. Protons are taken up via the inlet half-channel and released through the outlet half-channel, following a Grotthuss mechanism. The chain is ATP synthase F(0) complex subunit a from Tetraodon nigroviridis (Spotted green pufferfish).